Consider the following 219-residue polypeptide: Redox-sensing transcriptional repressor Rex (219 aa).

The segment at residues 17–56 (VYLRVLDNLVKRDIEVVSSKSLSKETGFTAEQIRKDLAFF) is a DNA-binding region (H-T-H motif). 91–96 (GAGHLG) is an NAD(+) binding site.

The protein belongs to the transcriptional regulatory Rex family. As to quaternary structure, homodimer.

The protein localises to the cytoplasm. Functionally, modulates transcription in response to changes in cellular NADH/NAD(+) redox state. This chain is Redox-sensing transcriptional repressor Rex, found in Natranaerobius thermophilus (strain ATCC BAA-1301 / DSM 18059 / JW/NM-WN-LF).